Reading from the N-terminus, the 254-residue chain is Type III pantothenate kinase (254 aa).

An ATP-binding site is contributed by aspartate 6–valine 13. Glycine 107–arginine 110 contributes to the substrate binding site. Aspartate 109 acts as the Proton acceptor in catalysis. Aspartate 129 serves as a coordination point for K(+). Threonine 132 is an ATP binding site. Threonine 184 lines the substrate pocket.

This sequence belongs to the type III pantothenate kinase family. As to quaternary structure, homodimer. NH4(+) serves as cofactor. Requires K(+) as cofactor.

Its subcellular location is the cytoplasm. The catalysed reaction is (R)-pantothenate + ATP = (R)-4'-phosphopantothenate + ADP + H(+). It functions in the pathway cofactor biosynthesis; coenzyme A biosynthesis; CoA from (R)-pantothenate: step 1/5. Functionally, catalyzes the phosphorylation of pantothenate (Pan), the first step in CoA biosynthesis. This chain is Type III pantothenate kinase, found in Exiguobacterium sp. (strain ATCC BAA-1283 / AT1b).